Reading from the N-terminus, the 88-residue chain is Homeobox protein knotted-1-like 3 (88 aa).

The ELK domain occupies 4–24; the sequence is ELKKQLLRKYSGCLGNLRKEL. Positions 25–88 form a DNA-binding region, homeobox; TALE-type; the sequence is CKKRKKDKLP…NQRKRHWKPS (64 aa).

It belongs to the TALE/KNOX homeobox family. Strongly expressed in ear inflorescence primordia and shoot meristem. Weakly expressed in embryos. Absent from leaves.

Its subcellular location is the nucleus. Probably binds to the DNA sequence 5'-TGAC-3'. The chain is Homeobox protein knotted-1-like 3 (KNOX3) from Zea mays (Maize).